The chain runs to 303 residues: MTQQRTLKNTIRATGVGLHSGDKVYMTLRPAPVDHGIVFRRVDLEPVVEVPADAELVTETTLCTGLTCNGAKIQTVEHLMSALAGLGVDNVIVELSSAELPIMDGSSGPFVFLLQSAGIVEQNKAKRFIRIKQPVEVREGDKVARFEPYEGYKLGFTIEFNHPMIPAKQSRQEIEFSTSAYVKEISRARTFGFMRDLEYMRERNLGLGGSMDNAIVLDEFRVLNEDGLRYTNEFVRHKILDAIGDLYLAGGAILGAYEGFKSGHALNNKLVRALLADQAAWEWVSFPEGTEQPPVTYASPVYA.

The Zn(2+) site is built by His-78, His-237, and Asp-241. His-264 acts as the Proton donor in catalysis.

This sequence belongs to the LpxC family. Requires Zn(2+) as cofactor.

The enzyme catalyses a UDP-3-O-[(3R)-3-hydroxyacyl]-N-acetyl-alpha-D-glucosamine + H2O = a UDP-3-O-[(3R)-3-hydroxyacyl]-alpha-D-glucosamine + acetate. Its pathway is glycolipid biosynthesis; lipid IV(A) biosynthesis; lipid IV(A) from (3R)-3-hydroxytetradecanoyl-[acyl-carrier-protein] and UDP-N-acetyl-alpha-D-glucosamine: step 2/6. Its function is as follows. Catalyzes the hydrolysis of UDP-3-O-myristoyl-N-acetylglucosamine to form UDP-3-O-myristoylglucosamine and acetate, the committed step in lipid A biosynthesis. This Xanthomonas campestris pv. campestris (strain 8004) protein is UDP-3-O-acyl-N-acetylglucosamine deacetylase.